Here is a 334-residue protein sequence, read N- to C-terminus: Putative carboxypeptidase VC_A0337 (334 aa).

Ser112 functions as the Nucleophile in the catalytic mechanism. Catalysis depends on charge relay system residues Glu234 and His302.

This sequence belongs to the peptidase S66 family.

The chain is Putative carboxypeptidase VC_A0337 from Vibrio cholerae serotype O1 (strain ATCC 39315 / El Tor Inaba N16961).